A 513-amino-acid polypeptide reads, in one-letter code: Bifunctional pantoate ligase/cytidylate kinase (513 aa).

Residues 1–283 (MVQVFRTIAG…VGSTRLIDNL (283 aa)) are pantoate--beta-alanine ligase. 30–37 (MGSLHAGH) is an ATP binding site. His37 acts as the Proton donor in catalysis. Gln61 is a (R)-pantoate binding site. Beta-alanine is bound at residue Gln61. 150-153 (GAKD) serves as a coordination point for ATP. Residue Gln156 coordinates (R)-pantoate. Residues Val179 and 187 to 190 (MSSR) each bind ATP. The cytidylate kinase stretch occupies residues 284–513 (VLNHRLPIIA…IELYKKYNKG (230 aa)).

It in the N-terminal section; belongs to the pantothenate synthetase family. The protein in the C-terminal section; belongs to the cytidylate kinase family. Type 1 subfamily.

Its subcellular location is the cytoplasm. The catalysed reaction is (R)-pantoate + beta-alanine + ATP = (R)-pantothenate + AMP + diphosphate + H(+). It catalyses the reaction CMP + ATP = CDP + ADP. It carries out the reaction dCMP + ATP = dCDP + ADP. The protein operates within cofactor biosynthesis; (R)-pantothenate biosynthesis; (R)-pantothenate from (R)-pantoate and beta-alanine: step 1/1. Functionally, catalyzes the condensation of pantoate with beta-alanine in an ATP-dependent reaction via a pantoyl-adenylate intermediate. Catalyzes the transfer of a phosphate group from ATP to either CMP or dCMP to form CDP or dCDP and ADP, respectively. This Synechocystis sp. (strain ATCC 27184 / PCC 6803 / Kazusa) protein is Bifunctional pantoate ligase/cytidylate kinase.